Reading from the N-terminus, the 267-residue chain is Hydroxyethylthiazole kinase (267 aa).

A substrate-binding site is contributed by M46. 2 residues coordinate ATP: R122 and S168. Position 195 (G195) interacts with substrate.

Belongs to the Thz kinase family. The cofactor is Mg(2+).

It carries out the reaction 5-(2-hydroxyethyl)-4-methylthiazole + ATP = 4-methyl-5-(2-phosphooxyethyl)-thiazole + ADP + H(+). The protein operates within cofactor biosynthesis; thiamine diphosphate biosynthesis; 4-methyl-5-(2-phosphoethyl)-thiazole from 5-(2-hydroxyethyl)-4-methylthiazole: step 1/1. Functionally, catalyzes the phosphorylation of the hydroxyl group of 4-methyl-5-beta-hydroxyethylthiazole (THZ). This Nitratidesulfovibrio vulgaris (strain DP4) (Desulfovibrio vulgaris) protein is Hydroxyethylthiazole kinase.